We begin with the raw amino-acid sequence, 155 residues long: Xanthine-guanine phosphoribosyltransferase (155 aa).

Residues 37-38, arginine 69, and 90-98 each bind 5-phospho-alpha-D-ribose 1-diphosphate; these read RG and DDLVDTGGT. A GMP-binding site is contributed by arginine 69. Aspartate 91 provides a ligand contact to Mg(2+). Guanine contacts are provided by aspartate 94 and isoleucine 137. Xanthine contacts are provided by aspartate 94 and isoleucine 137. GMP is bound by residues 94–98 and 136–137; these read DTGGT and WI.

It belongs to the purine/pyrimidine phosphoribosyltransferase family. XGPT subfamily. Homotetramer. Mg(2+) is required as a cofactor.

Its subcellular location is the cell inner membrane. The enzyme catalyses GMP + diphosphate = guanine + 5-phospho-alpha-D-ribose 1-diphosphate. It carries out the reaction XMP + diphosphate = xanthine + 5-phospho-alpha-D-ribose 1-diphosphate. It catalyses the reaction IMP + diphosphate = hypoxanthine + 5-phospho-alpha-D-ribose 1-diphosphate. It functions in the pathway purine metabolism; GMP biosynthesis via salvage pathway; GMP from guanine: step 1/1. The protein operates within purine metabolism; XMP biosynthesis via salvage pathway; XMP from xanthine: step 1/1. Its function is as follows. Purine salvage pathway enzyme that catalyzes the transfer of the ribosyl-5-phosphate group from 5-phospho-alpha-D-ribose 1-diphosphate (PRPP) to the N9 position of the 6-oxopurines guanine and xanthine to form the corresponding ribonucleotides GMP (guanosine 5'-monophosphate) and XMP (xanthosine 5'-monophosphate), with the release of PPi. To a lesser extent, also acts on hypoxanthine. This is Xanthine-guanine phosphoribosyltransferase from Aeromonas salmonicida (strain A449).